We begin with the raw amino-acid sequence, 224 residues long: Prolactin-3D1 (224 aa).

Positions 1 to 29 are cleaved as a signal peptide; sequence MQLTLNLSGSAGMQLLLLVSSLLLWENVS. Cystine bridges form between C81–C199 and C216–C224. 2 N-linked (GlcNAc...) asparagine glycosylation sites follow: N109 and N158.

Belongs to the somatotropin/prolactin family.

It is found in the secreted. The polypeptide is Prolactin-3D1 (Prl3d1) (Mus musculus (Mouse)).